The following is a 210-amino-acid chain: Cell division protein SepF (210 aa).

Low complexity-rich tracts occupy residues 36–47 and 59–69; these read QQQQTPAAVPTQ and RASATTATTAS. 2 disordered regions span residues 36-69 and 182-210; these read QQQQ…TTAS and NEMS…QMIQ.

It belongs to the SepF family. As to quaternary structure, homodimer. Interacts with FtsZ.

It is found in the cytoplasm. Cell division protein that is part of the divisome complex and is recruited early to the Z-ring. Probably stimulates Z-ring formation, perhaps through the cross-linking of FtsZ protofilaments. Its function overlaps with FtsA. The chain is Cell division protein SepF from Trichodesmium erythraeum (strain IMS101).